The following is a 572-amino-acid chain: MSKLIKGIAASDGVAIAKAYLLVEPDLTFDKNEKVTDVEGEVAKFNSAIEASKVELTKIRNNAEVQLGADKAAIFDAHLLVLDDPELIQPIQDKIKNENANAATALTDVTTQFVTIFESMDNEYMKERAADIRDVSKRVLSHILGVELPNPSMIDESVVIVGNDLTPSDTAQLNKEFVQGFATNIGGRTSHSAIMSRSLEIPAIVGTKSITQEVKQGDMIIVDGLNGDVIVNPTEDELIAYQDKRERYFADKKELQKLRDADTVTVDGVHAELAANIGTPNDLPGVIENGAQGIGLYRTEFLYMGRDQMPTEEEQFEAYKEVLEAMGGKRVVVRTLDIGGDKELSYLNLPEEMNPFLGYRAIRLCLAQQDIFRPQLRALLRASVYGKLNIMFPMVATINEFREAKAILLEEKENLKNEGHDISDDIELGIMVEIPATAALADVFAKEVDFFSIGTNDLIQYTLAADRMSERVSYLYQPYNPSILRLVKQVIEASHKEGKWTGMCGEMAGDETAIPLLLGLGLDEFSMSATSILKARRQINGLSKNEMTELANRAVDCATQEEVIELVNNYVK.

The active-site Tele-phosphohistidine intermediate is the histidine 191. The phosphoenolpyruvate site is built by arginine 298 and arginine 334. Residues glutamate 433 and aspartate 457 each contribute to the Mg(2+) site. Phosphoenolpyruvate is bound by residues 456–457 (ND) and arginine 467. Cysteine 504 acts as the Proton donor in catalysis.

This sequence belongs to the PEP-utilizing enzyme family. Homodimer. Mg(2+) is required as a cofactor.

The protein resides in the cytoplasm. It carries out the reaction L-histidyl-[protein] + phosphoenolpyruvate = N(pros)-phospho-L-histidyl-[protein] + pyruvate. In terms of biological role, general (non sugar-specific) component of the phosphoenolpyruvate-dependent sugar phosphotransferase system (sugar PTS). This major carbohydrate active-transport system catalyzes the phosphorylation of incoming sugar substrates concomitantly with their translocation across the cell membrane. Enzyme I transfers the phosphoryl group from phosphoenolpyruvate (PEP) to the phosphoryl carrier protein (HPr). The sequence is that of Phosphoenolpyruvate-protein phosphotransferase (ptsI) from Staphylococcus aureus (strain COL).